Here is a 1082-residue protein sequence, read N- to C-terminus: MAAFKPNSINYILGLDIGIASVGWAMVEIDEEENPIRLIDLGVRVFERAEVPKTGDSLAMARRLARSVRRLTRRRAHRLLRTRRLLKREGVLQAANFDENGLIKSLPNTPWQLRAAALDRKLTPLEWSAVLLHLIKHRGYLSQRKNEGETADKELGALLKGVAGNAHALQTGDFRTPAELALNKFEKESGHIRNQRSDYSHTFSRKDLQAELILLFEKQKEFGNPHVSGGLKEGIETLLMTQRPALSGDAVQKMLGHCTFEPAEPKAAKNTYTAERFIWLTKLNNLRILEQGSERPLTDTERATLMDEPYRKSKLTYAQARKLLGLEDTAFFKGLRYGKDNAEASTLMEMKAYHAISRALEKEGLKDKKSPLNLSPELQDEIGTAFSLFKTDEDITGRLKDRIQPEILEALLKHISFDKFVQISLKALRRIVPLMEQGKRYDEACAEIYGDHYGKKNTEEKIYLPPIPADEIRNPVVLRALSQARKVINGVVRRYGSPARIHIETAREVGKSFKDRKEIEKRQEENRKDREKAAAKFREYFPNFVGEPKSKDILKLRLYEQQHGKCLYSGKEINLGRLNEKGYVEIDHALPFSRTWDDSFNNKVLVLGSENQNKGNQTPYEYFNGKDNSREWQEFKARVETSRFPRSKKQRILLQKFDEDGFKERNLNDTRYVNRFLCQFVADRMRLTGKGKKRVFASNGQITNLLRGFWGLRKVRAENDRHHALDAVVVACSTVAMQQKITRFVRYKEMNAFDGKTIDKETGEVLHQKTHFPQPWEFFAQEVMIRVFGKPDGKPEFEEADTLEKLRTLLAEKLSSRPEAVHEYVTPLFVSRAPNRKMSGQGHMETVKSAKRLDEGVSVLRVPLTQLKLKDLEKMVNREREPKLYEALKARLEAHKDDPAKAFAEPFYKYDKAGNRTQQVKAVRVEQVQKTGVWVRNHNGIADNATMVRVDVFEKGDKYYLVPIYSWQVAKGILPDRAVVQGKDEEDWQLIDDSFNFKFSLHPNDLVEVITKKARMFGYFASCHRGTGNINIRIHDLDHKIGKNGILEGIGVKTALSFQKYQIDELGKEIRPCRLKKRPPVR.

The active-site For RuvC-like nuclease domain is aspartate 16. Mg(2+) contacts are provided by aspartate 16, glutamate 504, and glutamate 508. An HNH Cas9-type domain is found at 512–667; sequence SFKDRKEIEK…DEDGFKERNL (156 aa). The active-site Proton acceptor for HNH nuclease domain is the histidine 588. Residue histidine 723 participates in Mg(2+) binding.

It belongs to the CRISPR-associated protein Cas9 family. Subtype II-C subfamily. Monomer. Binds crRNA and tracrRNA. Mg(2+) serves as cofactor.

Functionally, CRISPR (clustered regularly interspaced short palindromic repeat) is an adaptive immune system that provides protection against mobile genetic elements (viruses, transposable elements and conjugative plasmids). CRISPR clusters contain spacers, sequences complementary to antecedent mobile elements, and target invading nucleic acids. CRISPR clusters are transcribed and processed into CRISPR RNA (crRNA). In type II CRISPR systems correct processing of pre-crRNA requires a trans-encoded small RNA (tracrRNA), endogenous ribonuclease 3 (rnc) and this protein, although RNase 3 is not required for 5'-processing of crRNA in this strain. Cas9/crRNA/tracrRNA endonucleolytically cleaves linear or circular dsDNA target complementary to the spacer; Cas9 is inactive in the absence of the 2 guide RNAs (gRNA, PubMed:23940360). Cas9 recognizes the protospacer adjacent motif (PAM) in the CRISPR repeat sequences to help distinguish self versus nonself, as targets within the bacterial CRISPR locus do not have PAMs. PAM recognition is also required for catalytic activity. Plasmids containing sequences homologous to endogenous spacer elements and that have flanking PAM consensus sequences cannot transform this strain unless the cas9 gene is disrupted or critical residues of Cas9 are mutated. The chain is CRISPR-associated endonuclease Cas9 from Neisseria meningitidis serogroup C (strain 8013).